The sequence spans 426 residues: Cytochrome b-c1 complex subunit 2, mitochondrial (426 aa).

A mitochondrion-targeting transit peptide spans 1-30 (MKSFTRNLRRFQTPRRNLHGISYTPKKVEG).

The protein belongs to the peptidase M16 family. UQCRC2/QCR2 subfamily. In terms of assembly, component of the ubiquinol-cytochrome c oxidoreductase (cytochrome b-c1 complex, complex III, CIII), a multisubunit enzyme composed of 3 respiratory subunits cytochrome b, cytochrome c1 and Rieske protein, 2 core protein subunits, and additional low-molecular weight protein subunits. The complex exists as an obligatory dimer and forms supercomplexes (SCs) in the inner mitochondrial membrane with cytochrome c oxidase (complex IV, CIV).

Its subcellular location is the mitochondrion inner membrane. Component of the ubiquinol-cytochrome c oxidoreductase, a multisubunit transmembrane complex that is part of the mitochondrial electron transport chain which drives oxidative phosphorylation. The respiratory chain contains 3 multisubunit complexes succinate dehydrogenase (complex II, CII), ubiquinol-cytochrome c oxidoreductase (cytochrome b-c1 complex, complex III, CIII) and cytochrome c oxidase (complex IV, CIV), that cooperate to transfer electrons derived from NADH and succinate to molecular oxygen, creating an electrochemical gradient over the inner membrane that drives transmembrane transport and the ATP synthase. The cytochrome b-c1 complex catalyzes electron transfer from ubiquinol to cytochrome c, linking this redox reaction to translocation of protons across the mitochondrial inner membrane, with protons being carried across the membrane as hydrogens on the quinol. In the process called Q cycle, 2 protons are consumed from the matrix, 4 protons are released into the intermembrane space and 2 electrons are passed to cytochrome c. This chain is Cytochrome b-c1 complex subunit 2, mitochondrial (qcr2), found in Schizosaccharomyces pombe (strain 972 / ATCC 24843) (Fission yeast).